A 187-amino-acid polypeptide reads, in one-letter code: Benzene 1,2-dioxygenase subunit beta (187 aa).

The protein belongs to the bacterial ring-hydroxylating dioxygenase beta subunit family. As to quaternary structure, this dioxygenase system consists of four proteins: the two subunits of the hydroxylase component (BnzA and BnzB), a ferredoxin (BnzC) and a ferredoxin reductase (BnzD). [2Fe-2S] cluster serves as cofactor. The cofactor is Fe cation.

It catalyses the reaction benzene + NADH + O2 + H(+) = cis-1,2-dihydrobenzene-1,2-diol + NAD(+). The enzyme catalyses toluene + NADH + O2 + H(+) = (1S,2R)-3-methylcyclohexa-3,5-diene-1,2-diol + NAD(+). Its pathway is aromatic compound metabolism; benzene degradation; catechol from benzene: step 1/2. The protein operates within xenobiotic degradation; toluene degradation. It functions in the pathway xenobiotic degradation; xylene degradation. In terms of biological role, catalyzes both the oxidation of benzene and toluene. The beta subunit may be responsible for the substrate specificity of the enzyme. This chain is Benzene 1,2-dioxygenase subunit beta (bnzB), found in Pseudomonas putida (strain ATCC 700007 / DSM 6899 / JCM 31910 / BCRC 17059 / LMG 24140 / F1).